Reading from the N-terminus, the 369-residue chain is F-box protein At3g08750 (369 aa).

The F-box domain occupies 6–53 (CLLLPSLPFELIEEILYKIPAESLIRFKSTCKKWYNLITEKRFMYNHL).

The polypeptide is F-box protein At3g08750 (Arabidopsis thaliana (Mouse-ear cress)).